The chain runs to 359 residues: Olfactory receptor 5T2 (359 aa).

Residues 1–64 (MSYSIYKSTV…GFTDNLELQT (64 aa)) lie on the Extracellular side of the membrane. The N-linked (GlcNAc...) asparagine glycan is linked to N44. The chain crosses the membrane as a helical span at residues 65-85 (IFFFLFLAIYLFTLMGNLGLI). Topologically, residues 86–93 (LVVIRDSQ) are cytoplasmic. A helical transmembrane segment spans residues 94–114 (LHKPMYYFLSMLSSVDACYSS). The Extracellular segment spans residues 115–138 (VITPNMLVDFTTKNKVISFLGCVA). The helical transmembrane segment at 139–159 (QVFLACSFGTTECFLLAAMAY) threads the bilayer. The Cytoplasmic portion of the chain corresponds to 160-178 (DRYVAIYNPLLYSVSMSPR). The chain crosses the membrane as a helical span at residues 179–199 (VYMPLINASYVAGILHATIHT). The Extracellular segment spans residues 200–235 (VATFSLSFCGANEIRRVFCDIPPLLAISYSDTHTNQ). The chain crosses the membrane as a helical span at residues 236 to 256 (LLLFYFVGSIELVTILIVLIS). Residues 257–276 (YGLILLAILKMYSAEGRRKV) lie on the Cytoplasmic side of the membrane. The helical transmembrane segment at 277–297 (FSTCGAHLTGVSIYYGTILFM) threads the bilayer. Residues 298 to 310 (YVRPSSSYASDHD) are Extracellular-facing. Residues 311–331 (MIVSIFYTIVIPLLNPVIYSL) form a helical membrane-spanning segment. The Cytoplasmic portion of the chain corresponds to 332–359 (RNKDVKDSMKKMFGKNQVINKVYFHTKK).

It belongs to the G-protein coupled receptor 1 family.

Its subcellular location is the cell membrane. Its function is as follows. Odorant receptor. The sequence is that of Olfactory receptor 5T2 (OR5T2) from Homo sapiens (Human).